Reading from the N-terminus, the 216-residue chain is ATP phosphoribosyltransferase (216 aa).

The protein belongs to the ATP phosphoribosyltransferase family. Short subfamily. Heteromultimer composed of HisG and HisZ subunits.

Its subcellular location is the cytoplasm. It carries out the reaction 1-(5-phospho-beta-D-ribosyl)-ATP + diphosphate = 5-phospho-alpha-D-ribose 1-diphosphate + ATP. It functions in the pathway amino-acid biosynthesis; L-histidine biosynthesis; L-histidine from 5-phospho-alpha-D-ribose 1-diphosphate: step 1/9. Its function is as follows. Catalyzes the condensation of ATP and 5-phosphoribose 1-diphosphate to form N'-(5'-phosphoribosyl)-ATP (PR-ATP). Has a crucial role in the pathway because the rate of histidine biosynthesis seems to be controlled primarily by regulation of HisG enzymatic activity. This is ATP phosphoribosyltransferase from Prochlorococcus marinus (strain MIT 9211).